A 1080-amino-acid chain; its full sequence is Ubiquitin-activating enzyme E1 1 (1080 aa).

The segment covering 1 to 14 (MLHKRASEANDKND) has biased composition (basic and acidic residues). Disordered stretches follow at residues 1-20 (MLHK…IIGS) and 29-50 (RIDF…GSSR). Positions 38-49 (DKSSSILASGSS) are enriched in low complexity. ATP-binding positions include A502, D528, R539, K552, and 600 to 601 (DN). C656 (glycyl thioester intermediate) is an active-site residue.

Belongs to the ubiquitin-activating E1 family. In terms of assembly, monomer. In terms of tissue distribution, expressed in leaves, flowers, roots and stems. Detected in germinating seeds, cotyledons, hypocotyls, vascular tissues, anthers, filaments, pollen, style, stigma, sepals, petals, ovary, developing ovules, funiculi and silique walls.

It catalyses the reaction ATP + ubiquitin + [E1 ubiquitin-activating enzyme]-L-cysteine = AMP + diphosphate + S-ubiquitinyl-[E1 ubiquitin-activating enzyme]-L-cysteine.. The protein operates within protein modification; protein ubiquitination. Its function is as follows. Activates ubiquitin by first adenylating its C-terminal glycine residue with ATP, and thereafter linking this residue to the side chain of a cysteine residue in E1, yielding a ubiquitin-E1 thioester and free AMP. This chain is Ubiquitin-activating enzyme E1 1 (UBA1), found in Arabidopsis thaliana (Mouse-ear cress).